The chain runs to 425 residues: GTPase Obg (425 aa).

The Obg domain maps to 1–158; that stretch reads MFKDYAKIHV…LWLELELKLL (158 aa). Residues 159-329 form the OBG-type G domain; sequence ADVGLVGFPN…LIYRTYRLLE (171 aa). GTP is bound by residues 165-172, 190-194, 212-215, 282-285, and 310-312; these read GFPNAGKS, FTTLE, DIPG, NKTD, and SAL. Mg(2+)-binding residues include Ser-172 and Thr-192. An OCT domain is found at 341-421; it reads VPDERETDVT…IGRFEFEYSE (81 aa).

The protein belongs to the TRAFAC class OBG-HflX-like GTPase superfamily. OBG GTPase family. In terms of assembly, monomer. Mg(2+) serves as cofactor.

The protein resides in the cytoplasm. Functionally, an essential GTPase which binds GTP, GDP and possibly (p)ppGpp with moderate affinity, with high nucleotide exchange rates and a fairly low GTP hydrolysis rate. Plays a role in control of the cell cycle, stress response, ribosome biogenesis and in those bacteria that undergo differentiation, in morphogenesis control. In Desulforudis audaxviator (strain MP104C), this protein is GTPase Obg.